Reading from the N-terminus, the 1588-residue chain is Paternally-expressed gene 3 protein (1588 aa).

The 83-residue stretch at 46-128 (HQRFRNLIYV…TLLENYKEMY (83 aa)) folds into the SCAN box domain. Disordered stretches follow at residues 128–230 (YQPE…ESYQ), 266–306 (DGHS…RRGI), and 319–349 (KFIK…MSDD). A compositionally biased stretch (acidic residues) spans 129-142 (QPEDDNNSDVTSDD). 4 stretches are compositionally biased toward basic and acidic residues: residues 143 to 152 (DMTRNRRESS), 161 to 182 (SGDR…DRWS), 206 to 225 (FEMD…RSQD), and 295 to 306 (PEAKKSTHRRGI). 3 consecutive C2H2-type zinc fingers follow at residues 454-476 (YVCD…QIMH), 507-529 (FECK…RKIH), and 565-587 (YECR…QKIH). Residues 588-607 (FGDDKDNEREHERERERGET) show a composition bias toward basic and acidic residues. The interval 588-610 (FGDDKDNEREHERERERGETFRP) is disordered. The segment at 627–649 (YECKVCGETFLHSSSLKEHQKIH) adopts a C2H2-type 4 zinc-finger fold. Residues 838–930 (LVASKPPRSH…EFSVPSSNVR (93 aa)) form a disordered region. Over residues 868 to 881 (LNDKRQKIPARENP) the composition is skewed to basic and acidic residues. The C2H2-type 5 zinc finger occupies 969 to 991 (YECQECGECFAHSSDLTEHQKIH). The tract at residues 1056 to 1104 (EKSHGEESQGENTDGEETHSEETHGQETIEDPVIQGSDMEDPQKDDPDD) is disordered. Residues 1071-1082 (EETHSEETHGQE) are compositionally biased toward basic and acidic residues. 5 consecutive C2H2-type zinc fingers follow at residues 1107–1129 (YECE…QKVH), 1163–1185 (YECP…QRIH), 1225–1247 (IRCL…MRLH), 1282–1304 (FECA…VTVH), and 1332–1354 (YECK…KELH). The tract at residues 1393 to 1495 (EAAEPEVEAX…GIEDPEEGED (103 aa)) is disordered. A compositionally biased stretch (acidic residues) spans 1395 to 1415 (AEPEVEAXEPEVEAAEPEVEA). Tandem repeats lie at residues 1397–1403 (PEVEAXE), 1404–1410 (PEVEAAE), 1411–1417 (PEVEAAE), 1418–1422 (PNGEA), 1425–1429 (PDGEA), 1432–1436 (PIGEA), and 1439–1443 (PNGEA). Residues 1397–1417 (PEVEAXEPEVEAAEPEVEAAE) form a 3 X 7 AA repeat of P-E-V-E-A-A-E region. Residues 1418–1443 (PNGEAEGPDGEAAEPIGEAGQPNGEA) are 4 X 5 AA repeat of P-X-G-E-A. 2 stretches are compositionally biased toward acidic residues: residues 1449-1466 (DADE…ERAE) and 1475-1495 (PEGD…EGED). 2 consecutive C2H2-type zinc fingers follow at residues 1505–1527 (YDCH…LKTH) and 1564–1586 (FKCD…QNTH).

The protein belongs to the krueppel C2H2-type zinc-finger protein family. As to quaternary structure, homodimer. Interacts with SIAH1A and SIAH2. Interacts with TRAF2.

It localises to the nucleus. The protein resides in the cytoplasm. Its function is as follows. Induces apoptosis in cooperation with SIAH1A. Acts as a mediator between p53/TP53 and BAX in a neuronal death pathway that is activated by DNA damage. Acts synergistically with TRAF2 and inhibits TNF induced apoptosis through activation of NF-kappa-B. The protein is Paternally-expressed gene 3 protein (PEG3) of Pan paniscus (Pygmy chimpanzee).